A 240-amino-acid chain; its full sequence is Octanoyltransferase (240 aa).

The region spanning 49–233 is the BPL/LPL catalytic domain; sequence HQAEELVWLL…AFESVFGATR (185 aa). Residues 87-94, 162-164, and 175-177 each bind substrate; these read RGGQVTYH, AIG, and GIA. Cys-193 (acyl-thioester intermediate) is an active-site residue.

The protein belongs to the LipB family.

Its subcellular location is the cytoplasm. It carries out the reaction octanoyl-[ACP] + L-lysyl-[protein] = N(6)-octanoyl-L-lysyl-[protein] + holo-[ACP] + H(+). It functions in the pathway protein modification; protein lipoylation via endogenous pathway; protein N(6)-(lipoyl)lysine from octanoyl-[acyl-carrier-protein]: step 1/2. Catalyzes the transfer of endogenously produced octanoic acid from octanoyl-acyl-carrier-protein onto the lipoyl domains of lipoate-dependent enzymes. Lipoyl-ACP can also act as a substrate although octanoyl-ACP is likely to be the physiological substrate. This Bradyrhizobium sp. (strain ORS 278) protein is Octanoyltransferase.